A 446-amino-acid chain; its full sequence is Tubulin alpha chain-like 3 (446 aa).

Positions 1-4 (MREC) match the MREC motif motif. 8 residues coordinate GTP: Gln11, Glu78, Ser147, Gly151, Thr152, Thr186, Asn213, and Asn235. Position 78 (Glu78) interacts with Mg(2+). Glu261 is a catalytic residue.

The protein belongs to the tubulin family. In terms of assembly, dimer of alpha and beta chains. A typical microtubule is a hollow water-filled tube with an outer diameter of 25 nm and an inner diameter of 15 nM. Alpha-beta heterodimers associate head-to-tail to form protofilaments running lengthwise along the microtubule wall with the beta-tubulin subunit facing the microtubule plus end conferring a structural polarity. Microtubules usually have 13 protofilaments but different protofilament numbers can be found in some organisms and specialized cells. Requires Mg(2+) as cofactor. Post-translationally, some glutamate residues at the C-terminus are polyglutamylated, resulting in polyglutamate chains on the gamma-carboxyl group. Polyglutamylation plays a key role in microtubule severing by spastin (SPAST). SPAST preferentially recognizes and acts on microtubules decorated with short polyglutamate tails: severing activity by SPAST increases as the number of glutamates per tubulin rises from one to eight, but decreases beyond this glutamylation threshold. Glutamylation is also involved in cilia motility. In terms of processing, some glutamate residues at the C-terminus are monoglycylated but not polyglycylated due to the absence of functional TTLL10 in human. Monoglycylation is mainly limited to tubulin incorporated into cilia and flagella axonemes, which is required for their stability and maintenance. Flagella glycylation controls sperm motility. Both polyglutamylation and monoglycylation can coexist on the same protein on adjacent residues, and lowering glycylation levels increases polyglutamylation, and reciprocally.

The protein localises to the cytoplasm. The protein resides in the cytoskeleton. It carries out the reaction GTP + H2O = GDP + phosphate + H(+). Tubulin is the major constituent of microtubules, a cylinder consisting of laterally associated linear protofilaments composed of alpha- and beta-tubulin heterodimers. Microtubules grow by the addition of GTP-tubulin dimers to the microtubule end, where a stabilizing cap forms. Below the cap, tubulin dimers are in GDP-bound state, owing to GTPase activity of alpha-tubulin. The sequence is that of Tubulin alpha chain-like 3 (TUBAL3) from Homo sapiens (Human).